The chain runs to 535 residues: F-box protein At1g56610 (535 aa).

Transmembrane regions (helical) follow at residues 3 to 23, 37 to 57, and 82 to 102; these read FALV…SSSI, VLLL…LCLF, and LAPH…SLLF. An F-box; degenerate domain is found at 73-119; sequence TELCDLPKCLAPHILSWLPTKTAVTVSLLFMKGWWRSEMKNLSSLKF.

As to quaternary structure, part of a SCF (ASK-cullin-F-box) protein ligase complex. Interacts with ASK4.

The protein resides in the membrane. It participates in protein modification; protein ubiquitination. Component of SCF(ASK-cullin-F-box) E3 ubiquitin ligase complexes, which may mediate the ubiquitination and subsequent proteasomal degradation of target proteins. In Arabidopsis thaliana (Mouse-ear cress), this protein is F-box protein At1g56610.